The sequence spans 757 residues: 5-methyltetrahydropteroyltriglutamate--homocysteine methyltransferase (757 aa).

5-methyltetrahydropteroyltri-L-glutamate-binding positions include R16–K19 and K112. L-homocysteine contacts are provided by residues I432–S434 and E485. Residues I432 to S434 and E485 each bind L-methionine. 5-methyltetrahydropteroyltri-L-glutamate contacts are provided by residues R516 to C517 and W562. Residue D600 coordinates L-homocysteine. Residue D600 coordinates L-methionine. E606 provides a ligand contact to 5-methyltetrahydropteroyltri-L-glutamate. Residues H642, C644, and E666 each coordinate Zn(2+). H695 (proton donor) is an active-site residue. Residue C727 coordinates Zn(2+).

Belongs to the vitamin-B12 independent methionine synthase family. Zn(2+) is required as a cofactor.

The catalysed reaction is 5-methyltetrahydropteroyltri-L-glutamate + L-homocysteine = tetrahydropteroyltri-L-glutamate + L-methionine. It participates in amino-acid biosynthesis; L-methionine biosynthesis via de novo pathway; L-methionine from L-homocysteine (MetE route): step 1/1. Catalyzes the transfer of a methyl group from 5-methyltetrahydrofolate to homocysteine resulting in methionine formation. This is 5-methyltetrahydropteroyltriglutamate--homocysteine methyltransferase from Actinobacillus pleuropneumoniae serotype 5b (strain L20).